The sequence spans 666 residues: UvrABC system protein B (666 aa).

The Helicase ATP-binding domain maps to 26–414 (DSFQKGEKKV…KVVEQIIRPT (389 aa)). Residue 39–46 (GVTGSGKT) coordinates ATP. The Beta-hairpin motif lies at 92–115 (YYDYYQPEAYVPSSDTFIEKDSSI). The region spanning 429–591 (QIEDLLVEIR…ITPLTIKKEV (163 aa)) is the Helicase C-terminal domain. The region spanning 625-660 (EVLKEKLREEMMKAAKELDFERAAILRDKMLSIQTE) is the UVR domain.

Belongs to the UvrB family. As to quaternary structure, forms a heterotetramer with UvrA during the search for lesions. Interacts with UvrC in an incision complex.

It localises to the cytoplasm. Its function is as follows. The UvrABC repair system catalyzes the recognition and processing of DNA lesions. A damage recognition complex composed of 2 UvrA and 2 UvrB subunits scans DNA for abnormalities. Upon binding of the UvrA(2)B(2) complex to a putative damaged site, the DNA wraps around one UvrB monomer. DNA wrap is dependent on ATP binding by UvrB and probably causes local melting of the DNA helix, facilitating insertion of UvrB beta-hairpin between the DNA strands. Then UvrB probes one DNA strand for the presence of a lesion. If a lesion is found the UvrA subunits dissociate and the UvrB-DNA preincision complex is formed. This complex is subsequently bound by UvrC and the second UvrB is released. If no lesion is found, the DNA wraps around the other UvrB subunit that will check the other stand for damage. This is UvrABC system protein B from Leptospira interrogans serogroup Icterohaemorrhagiae serovar copenhageni (strain Fiocruz L1-130).